The chain runs to 93 residues: MEIKILRSGENYLELQIDGEEHTVGNLLKGYLLKVPGVKFASYSKPHPLIDSIILKIMTDGSISPKEALVKAIELAEEDTNKFIEEVKSIEKR.

The protein belongs to the archaeal Rpo11/eukaryotic RPB11/RPC19 RNA polymerase subunit family. As to quaternary structure, part of the RNA polymerase complex.

It localises to the cytoplasm. The catalysed reaction is RNA(n) + a ribonucleoside 5'-triphosphate = RNA(n+1) + diphosphate. DNA-dependent RNA polymerase (RNAP) catalyzes the transcription of DNA into RNA using the four ribonucleoside triphosphates as substrates. This Sulfurisphaera tokodaii (strain DSM 16993 / JCM 10545 / NBRC 100140 / 7) (Sulfolobus tokodaii) protein is DNA-directed RNA polymerase subunit Rpo11.